The sequence spans 339 residues: Major pollen allergen Lol p 5b (339 aa).

The signal sequence occupies residues 1-25 (MAVQKHTVALFLAVALVAGPAASYA). Repeat copies occupy residues 32-34 (PAT), 35-37 (PAT), 38-40 (PAA), 41-43 (PAT), 44-46 (AAT), 47-49 (PAT), 50-52 (PAT), 53-55 (PAT), and 56-58 (PAA). The 9 X 3 AA tandem repeats of [PA]-A-[TA] stretch occupies residues 32 to 58 (PATPATPAAPATAATPATPATPATPAA). Over residues 36–58 (ATPAAPATAATPATPATPATPAA) the composition is skewed to low complexity. The disordered stretch occupies residues 36–65 (ATPAAPATAATPATPATPATPAAVPSGKAT). The stretch at 285–290 (ATPAAA) is one 2-1; truncated repeat. The interval 285-334 (ATPAAAATATPTPAAATATATPAAAYATATPAAATATATPAAATATPAAA) is 6 X 9 AA approximate tandem repeats of T-A-T-A-T-P-A-A-A. A run of 4 repeats spans residues 292 to 300 (TATPTPAAA), 301 to 309 (TATATPAAA), 310 to 318 (YATATPAAA), and 319 to 327 (TATATPAAA). Residues 328 to 334 (TATPAAA) form a 2-6; truncated repeat.

Belongs to the Poa p IX/Phl p VI allergen family. Pollen, starch granules.

This is Major pollen allergen Lol p 5b from Lolium perenne (Perennial ryegrass).